Here is a 964-residue protein sequence, read N- to C-terminus: MPEQAQQGEQSVKRRRVTRACDECRKKKVKCDGQQPCIHCTVYSYECTYKKPTKRTQNSGNSGVLTLGNVTTGPSSSTVVAAAASNPNKLLSNIKTERAILPGASTIPASNNPSKPRKYKTKSTRLQSKIDRYKQIFDEVFPQLPDIDNLDIPVFLQIFHNFKRDSQSFLDDTVKEYTLIVNDSSSPIQPVLSSNSKNSTPDEFLPNMKSDSNSASSNREQDSVDTYSNIPVGREIKIILPPKAIALQFVKSTWEHCCVLLRFYHRPSFIRQLDELYETDPNNYTSKQMQFLPLCYAAIAVGALFSKSIVSNDSSREKFLQDEGYKYFIAARKLIDITNARDLNSIQAILMLIIFLQCSARLSTCYTYIGVAMRSALRAGFHRKLSPNSGFSPIEIEMRKRLFYTIYKLDVYINAMLGLPRSISPDDFDQTLPLDLSDENITEVAYLPENQHSVLSSTGISNEHTKLFLILNEIISELYPIKKTSNIISHETVTSLELKLRNWLDSLPKELIPNAENIDPEYERANRLLHLSFLHVQIILYRPFIHYLSRNMNAENVDPLCYRRARNSIAVARTVIKLAKEMVSNNLLTGSYWYACYTIFYSVAGLLFYIHEAQLPDKDSAREYYDILKDAETGRSVLIQLKDSSMAASRTYNLLNQIFEKLNSKTIQLTALHSSPSNESAFLVTNNSSALKPHLGDSLQPPVFFSSQDTKNSFSLAKSEESTNDYAMANYLNNTPISENPLNEAQQQDQVSQGTTNMSNERDPNNFLSIDIRLDNNGQSNILDATDDVFIRNDGDIPTNSAFDFSSSKSNASNNSNPDTINNNYNNVSGKNNNNNNITNNSNNNHNNNNNDNNNNNNNNNNNNNNNNNSGNSSNNNNNNNNNKNNNDFGIKIDNNSPSYEGFPQLQIPLSQDNLNIEDKEEMSPNIEIKNEQNMTDSNDILGVFDQLDAQLFGKYLPLNYPSE.

The zn(2)-C6 fungal-type DNA-binding region spans 21 to 47; the sequence is CDECRKKKVKCDGQQPCIHCTVYSYEC. Residues 104-125 form a disordered region; that stretch reads ASTIPASNNPSKPRKYKTKSTR. Ser166 is modified (phosphoserine; by ATM or ATR). Ser186 bears the Phosphoserine mark. Polar residues-rich tracts occupy residues 190–201, 209–225, and 733–759; these read PVLSSNSKNSTP, KSDSNSASSNREQDSVD, and NNTPISENPLNEAQQQDQVSQGTTNMS. 3 disordered regions span residues 190–225, 733–764, and 800–900; these read PVLSSNSKNSTPDEFLPNMKSDSNSASSNREQDSVD, NNTPISENPLNEAQQQDQVSQGTTNMSNERDP, and NSAF…SPSY. Positions 800 to 896 are enriched in low complexity; it reads NSAFDFSSSK…NDFGIKIDNN (97 aa). Ser963 carries the phosphoserine modification.

It belongs to the ASG1 family.

It localises to the nucleus. Probable transcription factor involved in the stress response. The sequence is that of Activator of stress genes 1 (ASG1) from Saccharomyces cerevisiae (strain ATCC 204508 / S288c) (Baker's yeast).